A 397-amino-acid polypeptide reads, in one-letter code: Argininosuccinate synthase (397 aa).

8–16 (AYSGGLDTS) contributes to the ATP binding site. An L-citrulline-binding site is contributed by Y87. G117 contacts ATP. 3 residues coordinate L-aspartate: T119, N123, and D124. Position 123 (N123) interacts with L-citrulline. Residues R127, S175, E259, and Y271 each coordinate L-citrulline.

This sequence belongs to the argininosuccinate synthase family. Type 1 subfamily. Homotetramer.

It localises to the cytoplasm. The catalysed reaction is L-citrulline + L-aspartate + ATP = 2-(N(omega)-L-arginino)succinate + AMP + diphosphate + H(+). The protein operates within amino-acid biosynthesis; L-arginine biosynthesis; L-arginine from L-ornithine and carbamoyl phosphate: step 2/3. This Streptomyces clavuligerus protein is Argininosuccinate synthase.